The primary structure comprises 513 residues: Flavonoid 3',5'-hydroxylase (513 aa).

Cys446 serves as a coordination point for heme.

This sequence belongs to the cytochrome P450 family. The cofactor is heme. As to expression, hypocotyl tissues.

It catalyses the reaction a 3',5'-unsubstituted flavanone + 2 reduced [NADPH--hemoprotein reductase] + 2 O2 = a 3',5'-dihydroxyflavanone + 2 oxidized [NADPH--hemoprotein reductase] + 2 H2O + 2 H(+). It functions in the pathway pigment biosynthesis; anthocyanin biosynthesis. Functionally, catalyzes the 3'5'-hydroxylation of naringenin and eriodictyol to form 5,7,3,'4',5'-pentahydroxyflavanone and 3',5'-hydroxylation of dihydrokaempferol and dihydroquercetin to form dihydromyricetin. This is Flavonoid 3',5'-hydroxylase (CYP75A2) from Solanum melongena (Eggplant).